The sequence spans 746 residues: MRQPNTQAEAQHTQPSVGSIAAHRPNTVAATVSGLEPDIDADLDAYEESEESQDGGARLPQGRFLDRERSWLAFNERVLELAEDPSTPLLERANFLAIFASNLDEFFMVRVAGLKRRIATGVATRSASGLQPREVLEMIWARSRELMARHAACFHEDVAPALAEEGIHLVRWSELAEKEQARLFTLFRHRIFPVLTPLAVDPAHPFPYISGLSLNLAVVVRNPVTGHRHFARVKVPPLLSRFLEASPGRYVPVEDVIAAHLEELFPGMEVLEHHTFRLTRNEDLEVEEDDAENLLQALEKELMRRRLGPPVRLEVEESVDREVLDLLVRELKIGEAEVYPLPGPLDLTGLFRIHSIDRPELKYPKFVAGTHRDLAEVESASAPDIFAALRTKDVLLHHPYDSFSTSVQAFLEQAAADPDVLAIKQTLYRTSGDSPIVDALIEAAESGKQVLVLVEIKARFDESANIKWARKLEESGCHVVYGLVGLKTHCKLSLVVRQEGETLRRYSHVGTGNYHPKTARLYEDLGLLTSDPQVGADLSDLFNRLSGYSRRETYRRLLVAPKSLRDGLVSRIHKEIQHHRAGRPAHVRIKVNSMVDEAVVDACYRASQAGVPVDVWVRGICALRPGVPGLSENIRVRSVLGRFLEHSRVFAFGNGGEPEVWLGSADMMHRNLDRRIEALVRVTDPAHRAALNRLLENGMSDGTASWHLGPDGEWTRHATDADGQPLRNIQEMLIDARRRRRGTATP.

Positions 1 to 17 (MRQPNTQAEAQHTQPSV) are enriched in polar residues. Positions 1–60 (MRQPNTQAEAQHTQPSVGSIAAHRPNTVAATVSGLEPDIDADLDAYEESEESQDGGARLP) are disordered. Acidic residues predominate over residues 37 to 53 (PDIDADLDAYEESEESQ). Asn102 lines the ATP pocket. Residues Arg429 and Arg459 each coordinate Mg(2+). His489 serves as the catalytic Phosphohistidine intermediate. 3 residues coordinate ATP: Tyr522, Arg618, and His646.

It belongs to the polyphosphate kinase 1 (PPK1) family. The cofactor is Mg(2+). Post-translationally, an intermediate of this reaction is the autophosphorylated ppk in which a phosphate is covalently linked to a histidine residue through a N-P bond.

It carries out the reaction [phosphate](n) + ATP = [phosphate](n+1) + ADP. Functionally, catalyzes the reversible transfer of the terminal phosphate of ATP to form a long-chain polyphosphate (polyP). This is Polyphosphate kinase from Streptomyces coelicolor (strain ATCC BAA-471 / A3(2) / M145).